Consider the following 205-residue polypeptide: Protein N-terminal glutamine amidohydrolase (205 aa).

Active-site residues include cysteine 20, histidine 74, and aspartate 90.

It belongs to the NTAQ1 family. Monomer.

It catalyses the reaction N-terminal L-glutaminyl-[protein] + H2O = N-terminal L-glutamyl-[protein] + NH4(+). Its function is as follows. Mediates the side-chain deamidation of N-terminal glutamine residues to glutamate, an important step in N-end rule pathway of protein degradation. Conversion of the resulting N-terminal glutamine to glutamate renders the protein susceptible to arginylation, polyubiquitination and degradation as specified by the N-end rule. Does not act on substrates with internal or C-terminal glutamine and does not act on non-glutamine residues in any position. The polypeptide is Protein N-terminal glutamine amidohydrolase (tun) (Drosophila grimshawi (Hawaiian fruit fly)).